Consider the following 278-residue polypeptide: Protoheme IX farnesyltransferase 1 (278 aa).

The next 9 membrane-spanning stretches (helical) occupy residues 12–32 (VIWLLILASVAGYIYGGGGVD), 35–55 (LFSLLAVAFLSTGGSAAFNHY), 76–96 (LITPNAALAYSLALSATGISL), 98–118 (FLLLGLLPGLFVLLGWLFYAV), 129–149 (WLNIFGGGFAGNAVFLGGYAL), 158–178 (AVLISFAIYLWIPSHIWALAF), 199–221 (ERAVAVISAINAAAAAYILWLYL), 226–248 (GAGGALVALGVAATIATSIYAAV), and 255–275 (MWKMYKASSPILALFLIALIL).

The protein belongs to the UbiA prenyltransferase family. Protoheme IX farnesyltransferase subfamily.

Its subcellular location is the cell membrane. It catalyses the reaction heme b + (2E,6E)-farnesyl diphosphate + H2O = Fe(II)-heme o + diphosphate. The protein operates within porphyrin-containing compound metabolism; heme O biosynthesis; heme O from protoheme: step 1/1. In terms of biological role, converts heme B (protoheme IX) to heme O by substitution of the vinyl group on carbon 2 of heme B porphyrin ring with a hydroxyethyl farnesyl side group. The chain is Protoheme IX farnesyltransferase 1 from Pyrobaculum aerophilum (strain ATCC 51768 / DSM 7523 / JCM 9630 / CIP 104966 / NBRC 100827 / IM2).